The following is a 192-amino-acid chain: E3 ubiquitin-protein ligase RNF185 (192 aa).

Over residues 1–14 (MASKGPSASASTEN) the composition is skewed to polar residues. The tract at residues 1–30 (MASKGPSASASTENSSAGGPSGSSNGTGES) is disordered. At 1–130 (MASKGPSASA…GGFQGFGFGD (130 aa)) the chain is on the cytoplasmic side. Residues 15–27 (SSAGGPSGSSNGT) are compositionally biased toward low complexity. The required for ubiquitin ligase activity and protection against ER stress-induced cell death stretch occupies residues 29–80 (ESGGQDSTFECNICLDTAKDAVISLCGHLFCWPCLHQWLETRPNRQVCPVCK). The RING-type zinc-finger motif lies at 39–80 (CNICLDTAKDAVISLCGHLFCWPCLHQWLETRPNRQVCPVCK). Residues 90 to 123 (PLYGRGSTGQQDPREKTPPRPQGQRPEPENRGGF) are disordered. The helical transmembrane segment at 131 to 151 (GGFQMSFGIGAFPFGIFATAF) threads the bilayer. Over 152-171 (NINDGRPPPAVPGTPQYVDE) the chain is Mitochondrial intermembrane. Residues 172-192 (QFLSRLFLFVALVIMFWLLIA) traverse the membrane as a helical segment.

As to quaternary structure, interacts with ATG5 and BNIP1.

It localises to the mitochondrion outer membrane. It is found in the endoplasmic reticulum membrane. It catalyses the reaction S-ubiquitinyl-[E2 ubiquitin-conjugating enzyme]-L-cysteine + [acceptor protein]-L-lysine = [E2 ubiquitin-conjugating enzyme]-L-cysteine + N(6)-ubiquitinyl-[acceptor protein]-L-lysine.. The protein operates within protein modification; protein ubiquitination. Functionally, E3 ubiquitin-protein ligase that regulates selective mitochondrial autophagy by mediating 'Lys-63'-linked polyubiquitination of BNIP1. Acts in the endoplasmic reticulum (ER)-associated degradation (ERAD) pathway, which targets misfolded proteins that accumulate in the endoplasmic reticulum (ER) for ubiquitination and subsequent proteasome-mediated degradation. Protects cells from ER stress-induced apoptosis. Responsible for the cotranslational ubiquitination and degradation of CFTR in the ERAD pathway. Also acts as a regulator of the innate antiviral response by catalyzing 'Lys-27'-linked polyubiquitination of CGAS, thereby promoting CGAS cyclic GMP-AMP synthase activity. Preferentially associates with the E2 enzymes UBE2J1 and UBE2J2. The polypeptide is E3 ubiquitin-protein ligase RNF185 (Rnf185) (Rattus norvegicus (Rat)).